Here is a 369-residue protein sequence, read N- to C-terminus: Maltose/maltodextrin import ATP-binding protein MalK (369 aa).

An ABC transporter domain is found at 4 to 234 (VTLHNVSKAY…PVNRFVASFI (231 aa)). ATP is bound at residue 36–43 (GPSGCGKS).

The protein belongs to the ABC transporter superfamily. Maltooligosaccharide importer (TC 3.A.1.1.1) family. As to quaternary structure, the complex is composed of two ATP-binding proteins (MalK), two transmembrane proteins (MalG and MalK) and a solute-binding protein (MalE).

The protein localises to the cell inner membrane. The catalysed reaction is D-maltose(out) + ATP + H2O = D-maltose(in) + ADP + phosphate + H(+). Part of the ABC transporter complex MalEFGK involved in maltose/maltodextrin import. Responsible for energy coupling to the transport system. This Photorhabdus laumondii subsp. laumondii (strain DSM 15139 / CIP 105565 / TT01) (Photorhabdus luminescens subsp. laumondii) protein is Maltose/maltodextrin import ATP-binding protein MalK.